The chain runs to 241 residues: Phosphoribosylaminoimidazole-succinocarboxamide synthase (241 aa).

The protein belongs to the SAICAR synthetase family.

It catalyses the reaction 5-amino-1-(5-phospho-D-ribosyl)imidazole-4-carboxylate + L-aspartate + ATP = (2S)-2-[5-amino-1-(5-phospho-beta-D-ribosyl)imidazole-4-carboxamido]succinate + ADP + phosphate + 2 H(+). The protein operates within purine metabolism; IMP biosynthesis via de novo pathway; 5-amino-1-(5-phospho-D-ribosyl)imidazole-4-carboxamide from 5-amino-1-(5-phospho-D-ribosyl)imidazole-4-carboxylate: step 1/2. The sequence is that of Phosphoribosylaminoimidazole-succinocarboxamide synthase from Deinococcus geothermalis (strain DSM 11300 / CIP 105573 / AG-3a).